Consider the following 537-residue polypeptide: 5,6-dihydroxyindole-2-carboxylic acid oxidase (537 aa).

Positions 1-24 (MSAPKLLSLGCIFFPLLLFQQARA) are cleaved as a signal peptide. The Lumenal, melanosome segment spans residues 25 to 477 (QFPRQCATVE…WPSREFSVPE (453 aa)). 5 disulfide bridges follow: Cys30–Cys41, Cys42–Cys65, Cys56–Cys99, Cys101–Cys110, and Cys113–Cys122. N-linked (GlcNAc...) asparagine glycosylation is found at Asn96 and Asn104. Asn181 is a glycosylation site (N-linked (GlcNAc...) asparagine). Zn(2+) is bound by residues His192, His215, and His224. 2 disulfides stabilise this stretch: Cys258–Cys261 and Cys290–Cys303. N-linked (GlcNAc...) asparagine glycosylation is found at Asn304 and Asn350. 2 residues coordinate Zn(2+): His377 and His381. Residue Asn385 is glycosylated (N-linked (GlcNAc...) asparagine). His404 is a Zn(2+) binding site. A helical transmembrane segment spans residues 478–501 (IIAIAVVGALLLVALIFGTASYLI). Residues 502–537 (RARRSMDEANQPLLTDQYQCYAEEYEKLQNPNQSVV) lie on the Cytoplasmic side of the membrane.

The protein belongs to the tyrosinase family. Monomer. Interacts with ATP7A. Interacts with SLC45A2. It depends on Cu(2+) as a cofactor. Zn(2+) is required as a cofactor. In terms of processing, glycosylated. Pigment cells.

Its subcellular location is the melanosome membrane. It carries out the reaction 2 5,6-dihydroxyindole-2-carboxylate + O2 = 2 indole-5,6-quinone-2-carboxylate + 2 H2O. Its pathway is pigment biosynthesis; melanin biosynthesis. The activity depends critically on the nature of the bound metal ion. Catalyzes the oxidation of 5,6-dihydroxyindole-2-carboxylic acid (DHICA) in the presence of bound Cu(2+) ions, but lacks activity in the presence of bound Zn(2+) ions. Functionally, plays a role in melanin biosynthesis. Catalyzes the oxidation of 5,6-dihydroxyindole-2-carboxylic acid (DHICA) into indole-5,6-quinone-2-carboxylic acid in the presence of bound Cu(2+) ions, but not in the presence of Zn(2+). May regulate or influence the type of melanin synthesized. Also to a lower extent, capable of hydroxylating tyrosine and producing melanin. This Homo sapiens (Human) protein is 5,6-dihydroxyindole-2-carboxylic acid oxidase.